Reading from the N-terminus, the 825-residue chain is Taste receptor cell protein 1 (825 aa).

The N-terminal stretch at 1-21 is a signal peptide; sequence MDKQWFPAAGILLAALLVVSA. Disordered stretches follow at residues 66–97 and 299–322; these read EREPEALGRRAGGLSTEGAGGQESPSMPGPSG and TSPSQASSLHSPRPSSASPLSASP. Residues 302–322 are compositionally biased toward low complexity; that stretch reads SQASSLHSPRPSSASPLSASP.

Expression is restricted to circumvallate papillae.

This Mus musculus (Mouse) protein is Taste receptor cell protein 1 (Trcg1).